A 285-amino-acid polypeptide reads, in one-letter code: Hydroxyethylthiazole kinase 1 (285 aa).

Residue methionine 48 coordinates substrate. ATP contacts are provided by arginine 124 and serine 183. Glycine 210 serves as a coordination point for substrate.

The protein belongs to the Thz kinase family. Requires Mg(2+) as cofactor.

The catalysed reaction is 5-(2-hydroxyethyl)-4-methylthiazole + ATP = 4-methyl-5-(2-phosphooxyethyl)-thiazole + ADP + H(+). Its pathway is cofactor biosynthesis; thiamine diphosphate biosynthesis; 4-methyl-5-(2-phosphoethyl)-thiazole from 5-(2-hydroxyethyl)-4-methylthiazole: step 1/1. Its function is as follows. Catalyzes the phosphorylation of the hydroxyl group of 4-methyl-5-beta-hydroxyethylthiazole (THZ). The chain is Hydroxyethylthiazole kinase 1 from Methanosphaera stadtmanae (strain ATCC 43021 / DSM 3091 / JCM 11832 / MCB-3).